Here is a 180-residue protein sequence, read N- to C-terminus: MFKLKINNFQLGFKLVQWPVTNHLLKHFYVFPINNKGGLAIKRIISLALFKKRLNKDKINNCHVWEEELPDGSYDMGFNGNFNHMEKRKSGYVTQKQFSEFKDANNQRLIKIETTLAIQGEQINKLTQTVEKQGEQINQLVQVVLLQGASKLENFKWSKKHKDKSLMPAWIVWKIFWWKV.

Belongs to the UPF0134 family.

This is UPF0134 protein MPN_127 from Mycoplasma pneumoniae (strain ATCC 29342 / M129 / Subtype 1) (Mycoplasmoides pneumoniae).